Consider the following 830-residue polypeptide: Ribosome biogenesis protein ERB1 (830 aa).

The segment at 1-142 is disordered; the sequence is MAPQPLKVGT…NKDLPVDEKL (142 aa). 2 stretches are compositionally biased toward acidic residues: residues 35-44 and 52-109; these read VSEESDEEFG and MSDD…DSDS. Positions 131 to 142 are enriched in basic and acidic residues; it reads EENKDLPVDEKL. WD repeat units follow at residues 481–520, 523–563, 660–698, 701–740, 744–783, and 799–830; these read PGDTRVRSVSTSPDGQWIASGSEDGVVRVWDLGNGREVWR, LHAG…APHI, KTPGTIQRVAFHPSKPHFFAATQRYIRLYDLAAQKLIRT, SGVKWISSMDVHSGGDNLIIGSYDKKLAWFDMDLSAKPYK, YHNRALRSVAYHPTLPLFASASDDGTVHIFHCTVYTDLMQ, and IDGIGVLDLRWVPGKPWLVSSGADGEVRLWCS.

This sequence belongs to the WD repeat BOP1/ERB1 family. As to quaternary structure, component of the NOP7 complex, composed of ERB1, NOP7 and YTM1. The complex is held together by ERB1, which interacts with NOP7 via its N-terminal domain and with YTM1 via a high-affinity interaction between the seven-bladed beta-propeller domains of the 2 proteins. The NOP7 complex associates with the 66S pre-ribosome.

It localises to the nucleus. Its subcellular location is the nucleolus. The protein resides in the nucleoplasm. Component of the NOP7 complex, which is required for maturation of the 25S and 5.8S ribosomal RNAs and formation of the 60S ribosome. This chain is Ribosome biogenesis protein ERB1, found in Cryptococcus neoformans var. neoformans serotype D (strain JEC21 / ATCC MYA-565) (Filobasidiella neoformans).